The primary structure comprises 184 residues: MRFILVLVLILGLVSSSFGINVDKNEVSQTELQSARDFSSFAIGFAEGIEISLTGNLHKCVAAAESSFSEFSNSFHLIDSGLKHKSLGDAKSGLRDFGIGLVDLVKTYQRCGVGKFISEISAISKEVTNETGIIKLIIHEVIDIFHNSHSLTSDFKSAISDCGRGDYTGCGVASGKIVGILMRQ.

Positions 1–19 (MRFILVLVLILGLVSSSFG) are cleaved as a signal peptide. Asn129 carries N-linked (GlcNAc...) asparagine glycosylation. The Cell attachment site motif lies at 164–166 (RGD).

The protein belongs to the Sct family.

The protein resides in the secreted. This is Secreted protein B (29C) from Dictyostelium discoideum (Social amoeba).